Reading from the N-terminus, the 273-residue chain is Chondrolectin (273 aa).

The first 21 residues, methionine 1–alanine 21, serve as a signal peptide directing secretion. The Extracellular portion of the chain corresponds to arginine 22–asparagine 216. Residues valine 35–lysine 179 form the C-type lectin domain. 2 cysteine pairs are disulfide-bonded: cysteine 61–cysteine 178 and cysteine 144–cysteine 170. Residue asparagine 86 is glycosylated (N-linked (GlcNAc...) asparagine). The chain crosses the membrane as a helical span at residues leucine 217 to threonine 237. Residues cysteine 238 to valine 273 are Cytoplasmic-facing. Positions lysine 247–valine 273 are disordered. A compositionally biased stretch (polar residues) spans lysine 251 to lysine 263.

As to quaternary structure, interacts with RABGGTB. In adult mice preferentially expressed in skeletal muscle, testis, brain, and lung. Expressed in striated muscle (at protein level). Expressed in spinal cord. Detected in spinal cord fast motor neurons (at protein level).

The protein resides in the membrane. Functionally, may play a role in the development of the nervous system such as in neurite outgrowth and elongation. May be involved in motor axon growth and guidance. This Mus musculus (Mouse) protein is Chondrolectin (Chodl).